The following is a 212-amino-acid chain: Pyridoxine/pyridoxamine 5'-phosphate oxidase (212 aa).

Residues 8–11 and lysine 66 contribute to the substrate site; that span reads RRTY. Residues 61–66, 76–77, arginine 82, lysine 83, and glutamine 105 each bind FMN; these read RIVLLK and FT. The substrate site is built by tyrosine 123, arginine 127, and serine 131. FMN contacts are provided by residues 140–141 and tryptophan 184; that span reads QS. A substrate-binding site is contributed by 190–192; sequence RLH. Arginine 194 lines the FMN pocket.

It belongs to the pyridoxamine 5'-phosphate oxidase family. In terms of assembly, homodimer. Requires FMN as cofactor.

The catalysed reaction is pyridoxamine 5'-phosphate + O2 + H2O = pyridoxal 5'-phosphate + H2O2 + NH4(+). The enzyme catalyses pyridoxine 5'-phosphate + O2 = pyridoxal 5'-phosphate + H2O2. The protein operates within cofactor metabolism; pyridoxal 5'-phosphate salvage; pyridoxal 5'-phosphate from pyridoxamine 5'-phosphate: step 1/1. It participates in cofactor metabolism; pyridoxal 5'-phosphate salvage; pyridoxal 5'-phosphate from pyridoxine 5'-phosphate: step 1/1. In terms of biological role, catalyzes the oxidation of either pyridoxine 5'-phosphate (PNP) or pyridoxamine 5'-phosphate (PMP) into pyridoxal 5'-phosphate (PLP). This chain is Pyridoxine/pyridoxamine 5'-phosphate oxidase, found in Cupriavidus pinatubonensis (strain JMP 134 / LMG 1197) (Cupriavidus necator (strain JMP 134)).